The primary structure comprises 278 residues: Protein canopy homolog 3 (278 aa).

A signal peptide spans Met1–Leu30. The Saposin B-type domain maps to Ser47 to Thr271. 3 disulfides stabilise this stretch: Cys49–Cys206, Cys52–Cys194, and Cys104–Cys166. Residue Asn153 is glycosylated (N-linked (GlcNAc...) asparagine). A coiled-coil region spans residues Asn153 to Asp179. A disordered region spans residues Lys215–Leu278. Positions Ala233 to Ser243 are enriched in low complexity.

This sequence belongs to the canopy family. In terms of assembly, interacts with HSP90B1; this interaction is disrupted in the presence of ATP. Interacts with TLR1, TLR2, TLR4 and TLR9. Strongest interaction with TLR4.

The protein resides in the endoplasmic reticulum. Functionally, toll-like receptor (TLR)-specific co-chaperone for HSP90B1. Required for proper TLR folding, except that of TLR3, and hence controls TLR exit from the endoplasmic reticulum. Consequently, required for both innate and adaptive immune responses. In Homo sapiens (Human), this protein is Protein canopy homolog 3 (CNPY3).